Reading from the N-terminus, the 139-residue chain is Protein Turandot B (139 aa).

The first 21 residues, 1–21, serve as a signal peptide directing secretion; that stretch reads MNFKTALICFALLLIGTLCSA.

It belongs to the Turandot family.

The protein resides in the secreted. Its function is as follows. A humoral factor that may play a role in stress tolerance. This chain is Protein Turandot B, found in Drosophila sechellia (Fruit fly).